A 549-amino-acid polypeptide reads, in one-letter code: Biotin-dependent acetyl-/propionyl-coenzyme A carboxylase beta5 subunit (549 aa).

A CoA carboxyltransferase N-terminal domain is found at 25–281; it reads TAGKLAELHK…NNFTDAPRYS (257 aa). Positions 295–542 constitute a CoA carboxyltransferase C-terminal domain; that stretch reads AKDLELDTLI…ERKIAHLPPK (248 aa).

Belongs to the AccD/PCCB family. In terms of assembly, the biotin-dependent acyl-CoA carboxylase complex is composed of AccA3, which contains the biotin carboxylase (BC) and biotin carboxyl carrier protein (BCCP) domains, and AccD5, which contains the carboxyl transferase (CT) domain.

The enzyme catalyses N(6)-carboxybiotinyl-L-lysyl-[protein] + acetyl-CoA = N(6)-biotinyl-L-lysyl-[protein] + malonyl-CoA. It carries out the reaction N(6)-carboxybiotinyl-L-lysyl-[protein] + propanoyl-CoA = methylmalonyl-CoA + N(6)-biotinyl-L-lysyl-[protein]. The protein operates within lipid metabolism; mycolic acid biosynthesis. Component of a biotin-dependent acyl-CoA carboxylase complex. This subunit transfers the CO2 from carboxybiotin to the CoA ester substrate. When associated with the alpha3 subunit AccA3, is involved in the carboxylation of acetyl-CoA and propionyl-CoA. This chain is Biotin-dependent acetyl-/propionyl-coenzyme A carboxylase beta5 subunit (accD5), found in Mycobacterium leprae (strain TN).